The following is a 230-amino-acid chain: Transcription factor bHLH147 (230 aa).

Residues 1 to 17 (MESISPVSNQLLQPTTT) are compositionally biased toward polar residues. Positions 1 to 52 (MESISPVSNQLLQPTTTSSNSDRSRRKRKKKSSPSSVEKSPSPSISLEKWRS) are disordered. Low complexity predominate over residues 33 to 46 (SPSSVEKSPSPSIS). Positions 147–196 (KQRATVLRLKAKGLPAVQRKVKVLSRLVPGCRKQSLPVVLEETTDYIAAM) constitute a bHLH domain. The interval 210-230 (VSSSPPPPTPGHEGGQTHMLG) is disordered.

As to quaternary structure, homodimer. Interacts with PRE3.

It localises to the nucleus. Functionally, atypical bHLH transcription factor probably unable to bind DNA. Negatively regulates brassinosteroid signaling. The chain is Transcription factor bHLH147 (BHLH147) from Arabidopsis thaliana (Mouse-ear cress).